Reading from the N-terminus, the 374-residue chain is MPADMKSGASDPRPSGERDKALNLVLGQIERNFGKGSIMRLGDASRMRVETISTGALTLDLALGGGYPKGRVVEIYGPESSGKTTLTLHAIAEVQKRGGVAAFVDAEHALDPVYAASLGVDVENLLVSQPDTGEMALEIVDQLVRSAAVDLVVVDSVAALTPRAEIEGEMGDLAVGAQARLMSQAMRKITGNIGKSGCTVIFLNQLRLKIGVTYGNPETTTGGNALKFYASVRLDIRRIQTLKKGTEEFGIRAKVKVAKNKVAPPFRIAEFDILFGRGISTLGCLLDLAEETGVVVRKGAWYSYEGDNIGQGRDNTISWMEENPDATATIETLVRQKLTEGSEVKANSMRPLAAAAKTAAADKSAPAKASEAAA.

Position 77–84 (77–84 (GPESSGKT)) interacts with ATP. Residues 355-374 (AAKTAAADKSAPAKASEAAA) form a disordered region.

It belongs to the RecA family.

It is found in the cytoplasm. Functionally, can catalyze the hydrolysis of ATP in the presence of single-stranded DNA, the ATP-dependent uptake of single-stranded DNA by duplex DNA, and the ATP-dependent hybridization of homologous single-stranded DNAs. It interacts with LexA causing its activation and leading to its autocatalytic cleavage. The polypeptide is Protein RecA (Synechococcus sp. (strain CC9605)).